Here is a 255-residue protein sequence, read N- to C-terminus: MWNIFKNKSGQSHKVKDKFQLDLDNIPKHIAIIMDGNGRWAKERKLPRSLGHKAGVETIRDIVKECNNIGVRYLTLYAFSTENWKRPKEEINALMELLVNYLRKEVAELHQNNVVVNTIGDVSKLPKACEDELMKAYNKTKNNTGLVLNLALNYGGRDEIIRAIKLMYKDIEKKGLDIENVNEDLLKNYLYTKGMPDPDLIIRPSGEQRISNFLLWQCAYSEFWYSNIKWPDFKKHHLHKAIKDYQNRNRRFGGV.

Asp-35 is an active-site residue. Asp-35 provides a ligand contact to Mg(2+). Substrate is bound by residues 36–39 (GNGR), Trp-40, Arg-48, His-52, and 80–82 (STE). Asn-83 serves as the catalytic Proton acceptor. Residues Trp-84, Arg-86, Arg-203, and 209–211 (RIS) contribute to the substrate site. Glu-222 serves as a coordination point for Mg(2+).

It belongs to the UPP synthase family. In terms of assembly, homodimer. Mg(2+) serves as cofactor.

Its function is as follows. Catalyzes the condensation of isopentenyl diphosphate (IPP) with allylic pyrophosphates generating different type of terpenoids. This chain is Isoprenyl transferase, found in Clostridium tetani (strain Massachusetts / E88).